Reading from the N-terminus, the 507-residue chain is Tabersonine/lochnericine 19-hydroxylase (507 aa).

Residues 8 to 28 (FFVLLLPFFIGIAFIYKLWNF) traverse the membrane as a helical segment. A glycan (N-linked (GlcNAc...) asparagine) is linked at Asn-167. Heme is bound at residue Cys-447.

It belongs to the cytochrome P450 family. Heme serves as cofactor. As to expression, confined to roots.

The protein localises to the endoplasmic reticulum membrane. The catalysed reaction is (-)-tabersonine + reduced [NADPH--hemoprotein reductase] + O2 = (-)-(R)-19-hydroxytabersonine + oxidized [NADPH--hemoprotein reductase] + H2O + H(+). The enzyme catalyses lochnericine + reduced [NADPH--hemoprotein reductase] + O2 = horhammericine + oxidized [NADPH--hemoprotein reductase] + H2O + H(+). It carries out the reaction (-)-vincadifformine + reduced [NADPH--hemoprotein reductase] + O2 = (-)-minovincinine + oxidized [NADPH--hemoprotein reductase] + H2O + H(+). It functions in the pathway alkaloid biosynthesis. Its function is as follows. Component of the monoterpenoid indole alkaloids (MIAs, e.g. echitovenine, tabersonine, lochnericine, 19-hydroxytabersonine and horhammericine) biosynthetic pathway; MIAs are used in cancer treatment and other medical applications. Cytochrome P450 catalyzing the conversion of (-)-tabersonine to 19-hydroxytabersonine, of lochnericine to horhammericine and of (-)-vincadifformine to (-)-minovincinine. The polypeptide is Tabersonine/lochnericine 19-hydroxylase (Catharanthus roseus (Madagascar periwinkle)).